The chain runs to 217 residues: Uracil-DNA glycosylase (217 aa).

Asp-62 functions as the Proton acceptor in the catalytic mechanism.

The protein belongs to the uracil-DNA glycosylase (UDG) superfamily. UNG family.

The protein localises to the cytoplasm. It carries out the reaction Hydrolyzes single-stranded DNA or mismatched double-stranded DNA and polynucleotides, releasing free uracil.. Excises uracil residues from the DNA which can arise as a result of misincorporation of dUMP residues by DNA polymerase or due to deamination of cytosine. The sequence is that of Uracil-DNA glycosylase from Streptococcus equi subsp. zooepidemicus (strain H70).